The primary structure comprises 513 residues: MLDDVAFIKTPAAKKQPPASNECGVWTTDSPAIHNAPLPADGPGSTSFSNTILFSILALVPGYITYKLGLGFKTWVFFFLILAIPILMAYWSIMSTFSPRINEKVKYPNRPISYYLEFHTPELKAKYETSNGGKGSKIPIETFQELYFDGKVSFKGDCLDVLEYKHDWASFRFTLGLFRFFLLGMIPEVIFHSQSQDEEQVRDHYDRGDDFYTWFLGPRMIYTSGVISDITREETLEELQDNKLTVMADKIDLKKGDHVLDIGCGWGTWTTFASSKYGANVTGITLGRNQTKWGNTLLKEYGIPSDQSRIVCCDYRDAPKSSKPSGKYDKITSVEMAEHVGIRRLTAYLEQCRDALEDDGLLFLQYSGLRKNWQYEDLEWGLFMNKYIFPGADASTPLSFFASCMESVGFEIVSVDNIGVHYSATLWRWYRNWIGNKDKVVNKYGVKWYRIWEFFLGSSVVASRNGTATCYQFICRKNINSYRRIDYVPQQKGLQGPVQEGTKWAKEFTNFYD.

The next 2 membrane-spanning stretches (helical) occupy residues 52–72 and 74–94; these read ILFSILALVPGYITYKLGLGF and TWVFFFLILAIPILMAYWSIM. S-adenosyl-L-methionine is bound by residues 222-223, 259-267, 285-290, and 315-316; these read YT, VLDIGCGWG, TLGRNQ, and YR.

It belongs to the CFA/CMAS family.

It localises to the membrane. The enzyme catalyses a (4E,8E)-4-sphinga-4,8-dienine ceramide + S-adenosyl-L-methionine = a 9-methyl-(4E,8E)-sphinga-4,8-dienine ceramide + S-adenosyl-L-homocysteine + H(+). The protein operates within lipid metabolism; sphingolipid metabolism. In terms of biological role, catalyzes methylation of the sphingoid base component of glucosylceramides (GluCers) at the C9-position. Sphingolipid C9-methylation requires 4,8-desaturated ceramides as substrates. Glucosylceramides play important roles in growth, differentiation and pathogenicity. The methyl group at the C9-position distinguishes fungal glucosylceramides from those of plants and animals, and may thus play a role in host-pathogen interactions enabling the host to recognize the fungal attack and initiate specific defense responses. Not necessary for vegetative growth at low temperatures, but plays a role in hyphal formation on solid medium. The polypeptide is Sphingolipid C9-methyltransferase (Candida albicans (strain SC5314 / ATCC MYA-2876) (Yeast)).